Reading from the N-terminus, the 862-residue chain is Leucine--tRNA ligase (862 aa).

The 'HIGH' region signature appears at 42–52; sequence PYPSGRLHMGH. Positions 622–626 match the 'KMSKS' region motif; it reads KMSKS. Lys625 provides a ligand contact to ATP.

It belongs to the class-I aminoacyl-tRNA synthetase family.

It localises to the cytoplasm. It carries out the reaction tRNA(Leu) + L-leucine + ATP = L-leucyl-tRNA(Leu) + AMP + diphosphate. This is Leucine--tRNA ligase from Vibrio campbellii (strain ATCC BAA-1116).